Consider the following 310-residue polypeptide: Tagatose-6-phosphate kinase (310 aa).

The protein belongs to the carbohydrate kinase PfkB family. LacC subfamily.

It catalyses the reaction D-tagatofuranose 6-phosphate + ATP = D-tagatofuranose 1,6-bisphosphate + ADP + H(+). The protein operates within carbohydrate metabolism; D-tagatose 6-phosphate degradation; D-glyceraldehyde 3-phosphate and glycerone phosphate from D-tagatose 6-phosphate: step 1/2. This Staphylococcus aureus (strain MRSA252) protein is Tagatose-6-phosphate kinase.